Consider the following 291-residue polypeptide: ATP synthase gamma chain (291 aa).

The protein belongs to the ATPase gamma chain family. F-type ATPases have 2 components, CF(1) - the catalytic core - and CF(0) - the membrane proton channel. CF(1) has five subunits: alpha(3), beta(3), gamma(1), delta(1), epsilon(1). CF(0) has three main subunits: a, b and c.

Its subcellular location is the cell inner membrane. In terms of biological role, produces ATP from ADP in the presence of a proton gradient across the membrane. The gamma chain is believed to be important in regulating ATPase activity and the flow of protons through the CF(0) complex. The chain is ATP synthase gamma chain from Neisseria gonorrhoeae (strain NCCP11945).